A 642-amino-acid chain; its full sequence is Frizzled-1 (642 aa).

Positions 1–68 (MAEEAAPSES…WLLEAPLLLG (68 aa)) are cleaved as a signal peptide. Disordered regions lie at residues 26–45 (PGRREEVGHEDTASHRRPRA) and 76–99 (QVSGPGQQAPPPPQPQQSGQQYNG). Residues 69–317 (VRAQAAGQVS…PEELRFSRTW (249 aa)) lie on the Extracellular side of the membrane. The FZ domain occupies 106–225 (PDHGYCQPIS…HGAGELCVGQ (120 aa)). Cystine bridges form between C111-C172, C119-C165, C156-C193, C182-C222, and C186-C210. A glycan (N-linked (GlcNAc...) asparagine) is linked at N125. The N-linked (GlcNAc...) asparagine glycan is linked to N226. A helical membrane pass occupies residues 318–338 (IGIWSVLCCASTLFTVLTYLV). Residues 339–349 (DMRRFSYPERP) lie on the Cytoplasmic side of the membrane. The chain crosses the membrane as a helical span at residues 350-370 (IIFLSGCYTAVAVAYIAGFLL). The Extracellular portion of the chain corresponds to 371 to 397 (EDRVVCNDKFAEDGARTVAQGTKKEGC). The helical transmembrane segment at 398–418 (TILFMMLYFFSMASSIWWVIL) threads the bilayer. The Cytoplasmic segment spans residues 419–440 (SLTWFLAAGMKWGHEAIEANSQ). The helical transmembrane segment at 441-461 (YFHLAAWAVPAIKTITILALG) threads the bilayer. Over 462–484 (QVDGDVLSGVCFVGLNNVDALRG) the chain is Extracellular. The helical transmembrane segment at 485–505 (FVLAPLFVYLFIGTSFLLAGF) threads the bilayer. The Cytoplasmic segment spans residues 506 to 531 (VSLFRIRTIMKHDGTKTEKLEKLMVR). Residues 532–552 (IGVFSVLYTVPATIVIACYFY) form a helical membrane-spanning segment. At 553 to 593 (EQAFRDQWERSWVAQSCKSYAIPCPHLQGGGGVPPHPPMSP) the chain is on the extracellular side. Residues 594–614 (DFTVFMIKYLMTLIVGITSGF) form a helical membrane-spanning segment. Topologically, residues 615-642 (WIWSGKTLNSWRKFYTRLTNSKQGETTV) are cytoplasmic. Residues 620 to 625 (KTLNSW) carry the Lys-Thr-X-X-X-Trp motif, mediates interaction with the PDZ domain of Dvl family members motif. The PDZ-binding signature appears at 640-642 (TTV).

The protein belongs to the G-protein coupled receptor Fz/Smo family. As to quaternary structure, interacts with MYOC. Interacts with WNT7B. In terms of processing, ubiquitinated by ZNRF3, leading to its degradation by the proteasome. As to expression, expressed in chondrocytes.

It is found in the cell membrane. Functionally, receptor for Wnt proteins. Activated by WNT7B. Activated by WNT3A, WNT3, WNT1 and to a lesser extent WNT2, but apparently not by WNT4, WNT5A, WNT5B, WNT6, WNT7A or WNT7B. Contradictory results showing activation by WNT7B have been described for mouse. Functions in the canonical Wnt/beta-catenin signaling pathway. The canonical Wnt/beta-catenin signaling pathway leads to the activation of disheveled proteins, inhibition of GSK-3 kinase, nuclear accumulation of beta-catenin and activation of Wnt target genes. A second signaling pathway involving PKC and calcium fluxes has been seen for some family members, but it is not yet clear if it represents a distinct pathway or if it can be integrated in the canonical pathway, as PKC seems to be required for Wnt-mediated inactivation of GSK-3 kinase. Both pathways seem to involve interactions with G-proteins. May be involved in transduction and intercellular transmission of polarity information during tissue morphogenesis and/or in differentiated tissues. The sequence is that of Frizzled-1 (Fzd1) from Mus musculus (Mouse).